The sequence spans 317 residues: Acetyl-coenzyme A carboxylase carboxyl transferase subunit alpha (317 aa).

Residues 40-293 (LEVRVREAIV…GDVIASALAE (254 aa)) form the CoA carboxyltransferase C-terminal domain.

It belongs to the AccA family. In terms of assembly, acetyl-CoA carboxylase is a heterohexamer composed of biotin carboxyl carrier protein (AccB), biotin carboxylase (AccC) and two subunits each of ACCase subunit alpha (AccA) and ACCase subunit beta (AccD).

Its subcellular location is the cytoplasm. The catalysed reaction is N(6)-carboxybiotinyl-L-lysyl-[protein] + acetyl-CoA = N(6)-biotinyl-L-lysyl-[protein] + malonyl-CoA. It functions in the pathway lipid metabolism; malonyl-CoA biosynthesis; malonyl-CoA from acetyl-CoA: step 1/1. Functionally, component of the acetyl coenzyme A carboxylase (ACC) complex. First, biotin carboxylase catalyzes the carboxylation of biotin on its carrier protein (BCCP) and then the CO(2) group is transferred by the carboxyltransferase to acetyl-CoA to form malonyl-CoA. The protein is Acetyl-coenzyme A carboxylase carboxyl transferase subunit alpha of Rhizobium johnstonii (strain DSM 114642 / LMG 32736 / 3841) (Rhizobium leguminosarum bv. viciae).